Consider the following 557-residue polypeptide: MKEKIRKKILLAPEEPGVYIFKNKGVPIYIGKAKRLSNRLRSYLNPQTEKVFRIGEEADELETIVVMNEREAFILEANLIKKYRPKYNVRLKDTDFYPYIRISDDEIPYVEIVKRKLWDGTYFGPYTSVQFVRNLLEILQKIMGFRTCKSDLKRIKRPCFLYHLGRCIGPCIGNIESHEEAIRKLREFLSGNMEEVFDYLKEKMETHSKMLDFENAAKYRDLLLNLSNVLESQGVVFEENINCDVLVHAHDLFVVLRVRNGYLVGKISFEMEGGNVEDFIREYYISGRGDIPKTLILESDLDEMDYSSLGFEYVGPPRSTTEEDLLEKAKKNLENELKMRGLRKEALEELMKLLNMKDFPYRIEGIDISHLQGKYTVASLVVFEDGFPKKGDYRRYKIEQDHPDDYESIRTVVKRRYSKHPLPNLLFVDGGIGQVNAAIEALKEIGKDCPVVGLAKKEETVVFENREIHLPHDHPVLRLLVQIRDETHRFAVSYHRKRREKESLRSVLDNVPGIGPIRKKKLIEHFGSLENIRSASLEEIARVIGSTEIARRVLDIL.

The GIY-YIG domain occupies 14-89 (EEPGVYIFKN…IKKYRPKYNV (76 aa)). The region spanning 194–229 (EEVFDYLKEKMETHSKMLDFENAAKYRDLLLNLSNV) is the UVR domain.

Belongs to the UvrC family. As to quaternary structure, interacts with UvrB in an incision complex.

It localises to the cytoplasm. In terms of biological role, the UvrABC repair system catalyzes the recognition and processing of DNA lesions. UvrC both incises the 5' and 3' sides of the lesion. The N-terminal half is responsible for the 3' incision and the C-terminal half is responsible for the 5' incision. This Thermotoga maritima (strain ATCC 43589 / DSM 3109 / JCM 10099 / NBRC 100826 / MSB8) protein is UvrABC system protein C.